We begin with the raw amino-acid sequence, 340 residues long: Major histocompatibility complex class I-related protein 1 (340 aa).

An N-terminal signal peptide occupies residues 1 to 22 (MGELTAFLLPLIIVLMVKHSNS). Positions 23–109 (RTHSLRYFRL…KRLQRHYNHS (87 aa)) are alpha-1. An antigen-binding cleft region spans residues 23–201 (RTHSLRYFRL…EYGKDTLQRT (179 aa)). The Extracellular portion of the chain corresponds to 23–302 (RTHSLRYFRL…QESEAIPLVM (280 aa)). Positions 29 and 31 each coordinate 8-(9H-purin-6-yl)-2-oxa-8-azabicyclo[3.3.1]nona-3,6-diene-4,6-dicarbaldehyde. 5-(2-oxoethylideneamino)-6-(D-ribitylamino)uracil contacts are provided by Arg-31, Ser-46, and Lys-65. Arg-31, Ser-46, and Lys-65 together coordinate 5-(2-oxopropylideneamino)-6-(D-ribitylamino)uracil. 7-hydroxy-6-methyl-8-(1-D-ribityl)lumazine contacts are provided by Arg-31, Ser-46, and Lys-65. 8-(9H-purin-6-yl)-2-oxa-8-azabicyclo[3.3.1]nona-3,6-diene-4,6-dicarbaldehyde is bound by residues Lys-65 and His-80. Lys-65 contributes to the 2-amino-4-oxopteridine-6-carbaldehyde binding site. Lys-65 lines the pyridoxal pocket. A glycan (N-linked (GlcNAc...) asparagine) is linked at Asn-107. Residues 110–201 (GSHTYQRMIG…EYGKDTLQRT (92 aa)) form an alpha-2 region. Arg-116 contacts 8-(9H-purin-6-yl)-2-oxa-8-azabicyclo[3.3.1]nona-3,6-diene-4,6-dicarbaldehyde. Positions 116, 174, and 175 each coordinate 5-(2-oxoethylideneamino)-6-(D-ribitylamino)uracil. 3 residues coordinate 5-(2-oxopropylideneamino)-6-(D-ribitylamino)uracil: Arg-116, Tyr-174, and Gln-175. 3 residues coordinate 7-hydroxy-6-methyl-8-(1-D-ribityl)lumazine: Arg-116, Tyr-174, and Gln-175. 2 cysteine pairs are disulfide-bonded: Cys-120/Cys-183 and Cys-222/Cys-278. Residues 202–293 (EPPLVRVNRK…GVHVVLQVPQ (92 aa)) form an alpha-3 region. An Ig-like C1-type domain is found at 203-282 (PPLVRVNRKE…SNLYSCHVEH (80 aa)). The segment at 294 to 302 (ESEAIPLVM) is connecting peptide. Residues 303–323 (KAVSGSIVFVIVLAGVGVLVW) traverse the membrane as a helical segment. At 324 to 340 (RRRPREQNGAVYLPTPD) the chain is on the cytoplasmic side.

This sequence belongs to the MHC class I family. Heterotrimer that consists of MR1, B2M and metabolite antigen. Major classes of metabolite ligands presented by MR1 include riboflavin-related antigens, pyrimidines and ribityl lumazines, nucleobase adducts and folate derivatives. Forms reversible covalent Schiff base complexes with microbial pyrimidine-based metabolite, which serves as a molecular switch triggering complete folding, stable association with B2M and translocation of the ternary complex from endoplasmic reticulum to the plasma membrane. Alternatively, forms non-Schiff base complexes with ribityl lumazines. On antigen-presenting cells, the ternary complex interacts with TCR on MR1-restricted T cells. Interacts with TAPBP and TAPBPL chaperones in the endoplasmic reticulum. TAPBP associated or not with MHC class I peptide loading complex binds ligand-free MR1 or MR1-B2M complex, providing for stable MR1 pools ready for metabolite antigen processing. TAPBPL interacts with MR1 in a ligand-independent way; this interaction may stabilize MR1 pool and facilitate ligand loading and dissociation. Structurally, MR1-B2M heterodimer adopts a topology similar to classical MHC class I molecules, with alpha-1 and alpha-2 domains of MR1 forming the antigen-binding cleft composed of two alpha-helices resting on a floor of 7-stranded anti-parallel beta-pleated sheet. MR1-B2M heterodimer (via alpha-helices) interacts with TCR (via CDR domains). N-glycosylated.

Its subcellular location is the cell membrane. The protein resides in the endoplasmic reticulum membrane. It is found in the golgi apparatus membrane. The protein localises to the early endosome membrane. It localises to the late endosome membrane. In terms of biological role, antigen-presenting molecule specialized in displaying microbial pyrimidine-based metabolites to alpha-beta T cell receptors (TCR) on innate-type mucosal-associated invariant T (MAIT) cells. In complex with B2M preferentially presents riboflavin-derived metabolites to semi-invariant TCRs on MAIT cells, guiding immune surveillance of the microbial metabolome at mucosal epithelial barriers. Signature pyrimidine-based microbial antigens are generated via non-enzymatic condensation of metabolite intermediates of the riboflavin pathway with by-products arising from other metabolic pathways such as glycolysis. Typical potent antigenic metabolites are 5-(2-oxoethylideneamino)-6-D-ribitylaminouracil (5-OE-RU) and 5-(2-oxopropylideneamino)-6-D-ribitylaminouracil (5-OP-RU), products of condensation of 5-amino-6-D-ribityaminouracil (5-A-RU) with glyoxal or methylglyoxal by-products, respectively. May present microbial antigens to various MAIT cell subsets, providing for unique recognition of diverse microbes, including pathogens that do not synthesize riboflavin. Upon antigen recognition, elicits rapid innate-type MAIT cell activation to eliminate pathogenic microbes by directly killing infected cells. During T cell development, drives thymic selection and post-thymic terminal differentiation of MAIT cells in a process dependent on commensal microflora. Acts as an immune sensor of cancer cell metabolome. May present a tumor-specific or -associated metabolite essential for cancer cell survival to a pan-cancer TCR on a non-MAIT CD8-positive T cell clone, triggering T cell-mediated killing of a wide range of cancer cell types. May present tumor-enriched pyridoxal and pyridoxal 5'-phosphate antigens, enabling preferential recognition of cancer cells. Presents nucleobase carbonyl adducts generated during oxidative stress. Captures M3Ade, a nucleobase adduct composed of one adenine modified by a malondialdehyde trimer, for recognition by MR1-restricted T cell clones expressing a polyclonal TCR repertoire. This is Major histocompatibility complex class I-related protein 1 from Pongo abelii (Sumatran orangutan).